A 408-amino-acid polypeptide reads, in one-letter code: Sporulation integral membrane protein YlbJ (408 aa).

The next 8 helical transmembrane spans lie at 6-26 (INTL…ISHP), 43-63 (VVFP…GFGI), 81-101 (VPGV…PAGA), 131-151 (LFIF…GILL), 214-234 (VTSS…FSVF), 294-314 (IIVS…VAGI), 324-344 (PFFI…MLLW), and 377-397 (LLVQ…IIIF).

It localises to the cell membrane. Its function is as follows. Required for spore cortex formation. This Bacillus subtilis (strain 168) protein is Sporulation integral membrane protein YlbJ (ylbJ).